A 223-amino-acid chain; its full sequence is Cytidylate kinase (223 aa).

ATP is bound at residue 12–20; the sequence is GPSGVGKGT.

Belongs to the cytidylate kinase family. Type 1 subfamily.

The protein resides in the cytoplasm. The catalysed reaction is CMP + ATP = CDP + ADP. It carries out the reaction dCMP + ATP = dCDP + ADP. The sequence is that of Cytidylate kinase from Xylella fastidiosa (strain M12).